Here is a 576-residue protein sequence, read N- to C-terminus: MNLINTVKNCIVEKLHILSDKKLIVLDDVILSKLIVDYPNNHNHGDLYTNAALILSSHIKKSPLEIAEILLSEFSNIKEISSINVVKPGFINFSISLYVWYEVVASINMLKEGFANVNIGNGQKVNVEFVSANPTGPMHIGHARGAIFGDVLANLLEKVGYQVVREYYINDAGTQIDVLVESVYLRYKEATGQDIVIGSGLYPGLYLREIGKLLYEKYGTDLLEMSFVRKMKIIRDVSLEYLMNLIKEDLALLGIEHDVFTSEAELLKNNIVEKCVKLLEDKQLIYYGVLEQPKGTEMQNWKPRTQMLFKSTDFGDDVDRALQKVDGSWTYFANDIAYHFDKISRGFQHMILELGSDHIGYVKRLKAAVKALSNNNATVDIKLHNTVNFLDDGVQVKMSKRSGEFLTIRDVIEKVGKDVVRFMMLTRKSDVVLDFDFAKVVEQSKNNPIFYVQYAHARVCSLMRNAPNILGIEDTDFSVLSSKEEILLIKLLAKWPNVVEMSAKTAEPHRITFYLIEVAEAFHVLWGYGNKNANRRFIIDNDVNLTSARIYLAKSVAYIISSGLKIFSIVPLEEMH.

The 'HIGH' region motif lies at 132–142; that stretch reads ANPTGPMHIGH.

The protein belongs to the class-I aminoacyl-tRNA synthetase family. Monomer.

It localises to the cytoplasm. The enzyme catalyses tRNA(Arg) + L-arginine + ATP = L-arginyl-tRNA(Arg) + AMP + diphosphate. This Ehrlichia chaffeensis (strain ATCC CRL-10679 / Arkansas) protein is Arginine--tRNA ligase.